A 362-amino-acid polypeptide reads, in one-letter code: Phospho-N-acetylmuramoyl-pentapeptide-transferase (362 aa).

10 helical membrane passes run 28–48 (GAVL…IAWL), 75–95 (TMGG…WADL), 100–120 (VWIV…DDYL), 134–154 (AKLV…WSLQ), 170–190 (VLLQ…VGAG), 201–221 (GLAI…SYLV), 241–261 (LAVF…FNAP), 265–285 (VFMG…ISVV), 290–310 (LVLG…IVQV), and 339–359 (TVVI…LATL).

The protein belongs to the glycosyltransferase 4 family. MraY subfamily. Requires Mg(2+) as cofactor.

It localises to the cell inner membrane. The catalysed reaction is UDP-N-acetyl-alpha-D-muramoyl-L-alanyl-gamma-D-glutamyl-meso-2,6-diaminopimeloyl-D-alanyl-D-alanine + di-trans,octa-cis-undecaprenyl phosphate = di-trans,octa-cis-undecaprenyl diphospho-N-acetyl-alpha-D-muramoyl-L-alanyl-D-glutamyl-meso-2,6-diaminopimeloyl-D-alanyl-D-alanine + UMP. The protein operates within cell wall biogenesis; peptidoglycan biosynthesis. Functionally, catalyzes the initial step of the lipid cycle reactions in the biosynthesis of the cell wall peptidoglycan: transfers peptidoglycan precursor phospho-MurNAc-pentapeptide from UDP-MurNAc-pentapeptide onto the lipid carrier undecaprenyl phosphate, yielding undecaprenyl-pyrophosphoryl-MurNAc-pentapeptide, known as lipid I. This is Phospho-N-acetylmuramoyl-pentapeptide-transferase from Paramagnetospirillum magneticum (strain ATCC 700264 / AMB-1) (Magnetospirillum magneticum).